A 58-amino-acid polypeptide reads, in one-letter code: Large ribosomal subunit protein uL30 (58 aa).

It belongs to the universal ribosomal protein uL30 family. As to quaternary structure, part of the 50S ribosomal subunit.

The chain is Large ribosomal subunit protein uL30 from Phocaeicola vulgatus (strain ATCC 8482 / DSM 1447 / JCM 5826 / CCUG 4940 / NBRC 14291 / NCTC 11154) (Bacteroides vulgatus).